Here is an 88-residue protein sequence, read N- to C-terminus: Small ribosomal subunit protein uS19 (88 aa).

Belongs to the universal ribosomal protein uS19 family.

Protein S19 forms a complex with S13 that binds strongly to the 16S ribosomal RNA. In Carsonella ruddii (strain PV), this protein is Small ribosomal subunit protein uS19.